Here is a 778-residue protein sequence, read N- to C-terminus: uncharacterized protein (778 aa).

The 92-residue stretch at 1-92 (MSFVIAVPEA…GARSYVVAEA (92 aa)) folds into the PE domain. Disordered stretches follow at residues 125–163 (ADGT…AGLI), 372–510 (TGLA…GDAF), and 718–778 (QGGL…GADG). Gly residues-rich tracts occupy residues 402–429 (NQTG…GGLG), 436–510 (DGTG…GDAF), and 718–763 (QGGL…GSSG).

The protein belongs to the mycobacterial PE family. PGRS subfamily.

This is an uncharacterized protein from Mycobacterium bovis (strain ATCC BAA-935 / AF2122/97).